Consider the following 676-residue polypeptide: DNA ligase (676 aa).

NAD(+)-binding positions include 41 to 45 (DLTYD), 90 to 91 (SL), and Glu-123. Lys-125 functions as the N6-AMP-lysine intermediate in the catalytic mechanism. NAD(+)-binding residues include Arg-146, Glu-180, Lys-293, and Lys-317. Zn(2+) contacts are provided by Cys-408, Cys-411, Cys-424, and Cys-429.

Belongs to the NAD-dependent DNA ligase family. LigA subfamily. Requires Mg(2+) as cofactor. Mn(2+) is required as a cofactor.

It carries out the reaction NAD(+) + (deoxyribonucleotide)n-3'-hydroxyl + 5'-phospho-(deoxyribonucleotide)m = (deoxyribonucleotide)n+m + AMP + beta-nicotinamide D-nucleotide.. DNA ligase that catalyzes the formation of phosphodiester linkages between 5'-phosphoryl and 3'-hydroxyl groups in double-stranded DNA using NAD as a coenzyme and as the energy source for the reaction. It is essential for DNA replication and repair of damaged DNA. This Borrelia turicatae (strain 91E135) protein is DNA ligase.